Reading from the N-terminus, the 297-residue chain is tRNA dimethylallyltransferase (297 aa).

Residue 10-17 (APTGAGKT) coordinates ATP. Residue 12 to 17 (TGAGKT) participates in substrate binding. The interaction with substrate tRNA stretch occupies residues 34–37 (DSRQ).

Belongs to the IPP transferase family. In terms of assembly, monomer. It depends on Mg(2+) as a cofactor.

The enzyme catalyses adenosine(37) in tRNA + dimethylallyl diphosphate = N(6)-dimethylallyladenosine(37) in tRNA + diphosphate. Catalyzes the transfer of a dimethylallyl group onto the adenine at position 37 in tRNAs that read codons beginning with uridine, leading to the formation of N6-(dimethylallyl)adenosine (i(6)A). The polypeptide is tRNA dimethylallyltransferase (Leptospira interrogans serogroup Icterohaemorrhagiae serovar Lai (strain 56601)).